The sequence spans 240 residues: Tubulin alpha chain (240 aa).

Asparagine 17 is a binding site for GTP. Glutamate 43 is an active-site residue.

The protein belongs to the tubulin family. As to quaternary structure, dimer of alpha and beta chains. A typical microtubule is a hollow water-filled tube with an outer diameter of 25 nm and an inner diameter of 15 nM. Alpha-beta heterodimers associate head-to-tail to form protofilaments running lengthwise along the microtubule wall with the beta-tubulin subunit facing the microtubule plus end conferring a structural polarity. Microtubules usually have 13 protofilaments but different protofilament numbers can be found in some organisms and specialized cells. Mg(2+) serves as cofactor. Post-translationally, undergoes a tyrosination/detyrosination cycle, the cyclic removal and re-addition of a C-terminal tyrosine residue by the enzymes tubulin tyrosine carboxypeptidase (TTCP) and tubulin tyrosine ligase (TTL), respectively.

Its subcellular location is the cytoplasm. It is found in the cytoskeleton. It catalyses the reaction GTP + H2O = GDP + phosphate + H(+). Tubulin is the major constituent of microtubules, a cylinder consisting of laterally associated linear protofilaments composed of alpha- and beta-tubulin heterodimers. Microtubules grow by the addition of GTP-tubulin dimers to the microtubule end, where a stabilizing cap forms. Below the cap, tubulin dimers are in GDP-bound state, owing to GTPase activity of alpha-tubulin. The sequence is that of Tubulin alpha chain from Octopus vulgaris (Common octopus).